Here is a 365-residue protein sequence, read N- to C-terminus: Autoinducer 2-binding periplasmic protein LuxP (365 aa).

Residues 1–23 (MKKALLFSLISMVGFSPASQATQ) form the signal peptide.

Belongs to the bacterial solute-binding protein 2 family.

Its subcellular location is the periplasm. In terms of biological role, binds to the signaling molecule autoinducer 2 (AI-2), a furanosyl borate diester, (3a-methyl-5,6-dihydrofuro-[2,3d][1,3,2]dioxaborole-2,2,6,6a-tetraol). This complex then interacts with the LuxQ sensor protein. This chain is Autoinducer 2-binding periplasmic protein LuxP (luxP), found in Vibrio harveyi (Beneckea harveyi).